A 440-amino-acid polypeptide reads, in one-letter code: Ribulose bisphosphate carboxylase large chain (440 aa).

Lysine 4 is subject to N6,N6,N6-trimethyllysine. The substrate site is built by asparagine 113 and threonine 163. Residue lysine 165 is the Proton acceptor of the active site. Lysine 167 contacts substrate. Positions 191, 193, and 194 each coordinate Mg(2+). Lysine 191 carries the N6-carboxylysine modification. Histidine 284 functions as the Proton acceptor in the catalytic mechanism. Substrate-binding residues include arginine 285, histidine 317, and serine 369.

The protein belongs to the RuBisCO large chain family. Type I subfamily. In terms of assembly, heterohexadecamer of 8 large chains and 8 small chains; disulfide-linked. The disulfide link is formed within the large subunit homodimers. Mg(2+) is required as a cofactor. In terms of processing, the disulfide bond which can form in the large chain dimeric partners within the hexadecamer appears to be associated with oxidative stress and protein turnover.

It is found in the plastid. Its subcellular location is the chloroplast. It carries out the reaction 2 (2R)-3-phosphoglycerate + 2 H(+) = D-ribulose 1,5-bisphosphate + CO2 + H2O. The enzyme catalyses D-ribulose 1,5-bisphosphate + O2 = 2-phosphoglycolate + (2R)-3-phosphoglycerate + 2 H(+). In terms of biological role, ruBisCO catalyzes two reactions: the carboxylation of D-ribulose 1,5-bisphosphate, the primary event in carbon dioxide fixation, as well as the oxidative fragmentation of the pentose substrate in the photorespiration process. Both reactions occur simultaneously and in competition at the same active site. This chain is Ribulose bisphosphate carboxylase large chain, found in Dicksonia antarctica (Australian tree fern).